Consider the following 571-residue polypeptide: ATP-dependent RNA helicase RhlB (571 aa).

Residues 9–37 (VTFSSFDLHPALIAGLESAGFTRCTPIQA) carry the Q motif motif. Residues 40–220 (LPVALPGGDV…YEHMNEPEKL (181 aa)) enclose the Helicase ATP-binding domain. 53–60 (AQTGTGKT) is a binding site for ATP. Residues 166-169 (DEAD) carry the DEAD box motif. The region spanning 231–393 (RVRQRIYFPS…PVTSELLTPL (163 aa)) is the Helicase C-terminal domain. A disordered region spans residues 391-558 (TPLPRAPRVP…KPSGSPSLLS (168 aa)). Residues 402–411 (EGEEADDDAG) show a composition bias toward acidic residues. A compositionally biased stretch (basic and acidic residues) spans 419–432 (REAREQRAAEEQRR). Residues 435 to 448 (GRGGPGGSRSGSGG) are compositionally biased toward gly residues. Residues 449 to 460 (GRRDGAGADGKP) are compositionally biased toward basic and acidic residues. Residues 483-497 (VVAAVAAQAPSAGVA) are compositionally biased toward low complexity. A compositionally biased stretch (basic residues) spans 503–512 (PRKRRRRRNG). Over residues 539 to 558 (VVAKPVRAAAKPSGSPSLLS) the composition is skewed to low complexity.

It belongs to the DEAD box helicase family. RhlB subfamily. In terms of assembly, component of the RNA degradosome, which is a multiprotein complex involved in RNA processing and mRNA degradation.

It is found in the cytoplasm. The catalysed reaction is ATP + H2O = ADP + phosphate + H(+). Functionally, DEAD-box RNA helicase involved in RNA degradation. Has RNA-dependent ATPase activity and unwinds double-stranded RNA. This Xanthomonas axonopodis pv. citri (strain 306) protein is ATP-dependent RNA helicase RhlB.